The sequence spans 187 residues: Threonylcarbamoyl-AMP synthase (187 aa).

The 184-residue stretch at 4–187 (TLDLDRAVAT…DARSGQILRD (184 aa)) folds into the YrdC-like domain.

This sequence belongs to the SUA5 family. TsaC subfamily.

Its subcellular location is the cytoplasm. The enzyme catalyses L-threonine + hydrogencarbonate + ATP = L-threonylcarbamoyladenylate + diphosphate + H2O. In terms of biological role, required for the formation of a threonylcarbamoyl group on adenosine at position 37 (t(6)A37) in tRNAs that read codons beginning with adenine. Catalyzes the conversion of L-threonine, HCO(3)(-)/CO(2) and ATP to give threonylcarbamoyl-AMP (TC-AMP) as the acyladenylate intermediate, with the release of diphosphate. This Xanthomonas euvesicatoria pv. vesicatoria (strain 85-10) (Xanthomonas campestris pv. vesicatoria) protein is Threonylcarbamoyl-AMP synthase.